The sequence spans 359 residues: Endosome-associated-trafficking regulator 1 (359 aa).

2 positions are modified to phosphoserine: S18 and S74. The interval 100–125 (LLDEDEDEEDGWNGAYLPSAMEQTHS) is required for interaction with PTPN13. The disordered stretch occupies residues 153 to 180 (SLPPWTLSDSDSRISPTGSPSADFTAHG). A compositionally biased stretch (polar residues) spans 159-174 (LSDSDSRISPTGSPSA). S167 and S171 each carry phosphoserine. Residues 185 to 295 (DRHLRTLQIS…FKRENEALRS (111 aa)) adopt a coiled-coil conformation.

Belongs to the ENTR1 family. Found in a complex with ENTR1, PTPN13 and GIT1. Interacts with PTPN13 (via the FERM domain). Interacts (via N-terminus) with GIT1 (via N- and C-terminus); this interaction is direct. Interacts with NOD2. Interacts (via N-terminus) with IFT88. Interacts with VPS35. In terms of processing, phosphorylated.

It is found in the cytoplasm. It localises to the early endosome. Its subcellular location is the endosome. The protein resides in the recycling endosome. The protein localises to the midbody. It is found in the cytoskeleton. It localises to the microtubule organizing center. Its subcellular location is the centrosome. The protein resides in the cilium basal body. Its function is as follows. Endosome-associated protein that plays a role in membrane receptor sorting, cytokinesis and ciliogenesis. Involved in the endosome-to-plasma membrane trafficking and recycling of SNX27-retromer-dependent cargo proteins, such as GLUT1. Involved in the regulation of cytokinesis; the function may involve PTPN13 and GIT1. Plays a role in the formation of cilia. Involved in cargo protein localization, such as PKD2, at primary cilia. Involved in the presentation of the tumor necrosis factor (TNF) receptor TNFRSF1A on the cell surface, and hence in the modulation of the TNF-induced apoptosis. The sequence is that of Endosome-associated-trafficking regulator 1 from Bos taurus (Bovine).